The primary structure comprises 230 residues: Large ribosomal subunit protein uL1 (230 aa).

Belongs to the universal ribosomal protein uL1 family. As to quaternary structure, part of the 50S ribosomal subunit.

Functionally, binds directly to 23S rRNA. The L1 stalk is quite mobile in the ribosome, and is involved in E site tRNA release. Protein L1 is also a translational repressor protein, it controls the translation of the L11 operon by binding to its mRNA. The protein is Large ribosomal subunit protein uL1 of Staphylococcus aureus (strain N315).